A 1023-amino-acid polypeptide reads, in one-letter code: MFHLRTCAAKLRPLTASQTVKTFSQNRPAAARTFGQIRCYTAPVAAEPFLSGTSSNYVEEMYYAWLENPKSVHKSWDIFFRNTNAGAPPGTAYQSPLPLSPGSLSAVARAGPLVEAQPNVDKLVEDHLAVQSLIRAYQIRGHHVAQLDPLGILDADLDSSVPADIISSTDKLGFYGLDESDLDKVFHLPTTTFIGGQESALPLREIIRRLEMAYCQHIGVEFMFINDLEQCQWIRQKFETPGVMQFTNEEKRTLLARLVRSTRFEEFLQRKWSSEKRFGLEGCEVLIPALKTIIDKSSENGVDYVIMGMPHRGRLNVLANVIRKELEQIFCQFDSKLEAADEGSGDVKYHLGMYHRRINRVTDRNITLSLVANPSHLEAADPVVMGKTKAEQFYCGDTEGKKVMSILLHGDAAFAGQGIVYETFHLSDLPSYTTHGTVHVVVNNQIGFTTDPRMARSSPYPTDVARVVNAPIFHVNSDDPEAVMYVCKVAAEWRSTFHKDVVVDLVCYRRNGHNEMDEPMFTQPLMYKQIRKQKPVLQKYAELLVSQGVVNQPEYEEEISKYDKICEEAFARSKDEKILHIKHWLDSPWPGFFTLDGQPRSMTCPSTGLTEDILTHIGNVASSVPVEDFTIHGGLSRILKTRGELVKNRTVDWALAEYMAFGSLLKEGIHIRLSGQDVERGTFSHRHHVLHDQNVDKRTCIPMNHLWPNQAPYTVCNSSLSEYGVLGFELGFAMASPNALVLWEAQFGDFHNTAQCIIDQFICPGQAKWVRQNGIVLLLPHGMEGMGPEHSSARPERFLQMCNDDPDVLPDLKEANFDINQLYDCNWVVVNCSTPGNFFHVLRRQILLPFRKPLIIFTPKSLLRHPEARSNFDEMLPGTHFQRVIPEDGPAAQNPGNVKRLLFCTGKVYYDLTRERKARDMVEQVAITRIEQLSPFPFDLLLQEVQKYPSAELAWCQEEHKNQGYYDYVKPRLRTTISRAKPVWYAGRDPAAAPATGNKKTHLTELQRLLDTAFDLDAFKNFS.

A mitochondrion-targeting transit peptide spans M1–Y40. N6-succinyllysine is present on K74. S100 bears the Phosphoserine mark. H143, D156, and D158 together coordinate Ca(2+). R312 provides a ligand contact to thiamine diphosphate. The residue at position 401 (K401) is an N6-acetyllysine. Residues D411, N444, and I446 each contribute to the thiamine diphosphate site. D411, N444, and I446 together coordinate Mg(2+). K534 is covalently cross-linked (Glycyl lysine isopeptide (Lys-Gly) (interchain with G-Cter in ubiquitin)). K564 bears the N6-succinyllysine mark. Q676 contacts thiamine diphosphate. An N6-acetyllysine modification is found at K970.

This sequence belongs to the alpha-ketoglutarate dehydrogenase family. Homodimer. The 2-oxoglutarate dehydrogenase complex is composed of OGDH (2-oxoglutarate dehydrogenase; E1), DLST (dihydrolipoamide succinyltransferase; E2), DLD (dihydrolipoamide dehydrogenase; E3) and the assembly factor KGD4. It contains multiple copies of the three enzymatic components (E1, E2 and E3). In the nucleus, the 2-oxoglutarate dehydrogenase complex associates with KAT2A. Interacts with ABHD11; this interaction maintains the functional lipoylation of the 2-oxoglutarate dehydrogenase complex. The cofactor is thiamine diphosphate. Mg(2+) serves as cofactor.

Its subcellular location is the mitochondrion. It localises to the nucleus. The catalysed reaction is N(6)-[(R)-lipoyl]-L-lysyl-[protein] + 2-oxoglutarate + H(+) = N(6)-[(R)-S(8)-succinyldihydrolipoyl]-L-lysyl-[protein] + CO2. Calcium ions and ADP stimulate, whereas ATP and NADH reduce catalytic activity. Functionally, 2-oxoglutarate dehydrogenase (E1o) component of the 2-oxoglutarate dehydrogenase complex (OGDHC). Participates in the first step, rate limiting for the overall conversion of 2-oxoglutarate to succinyl-CoA and CO(2) catalyzed by the whole OGDHC. Catalyzes the irreversible decarboxylation of 2-oxoglutarate (alpha-ketoglutarate) via the thiamine diphosphate (ThDP) cofactor and subsequent transfer of the decarboxylated acyl intermediate on an oxidized dihydrolipoyl group that is covalently amidated to the E2 enzyme (dihydrolipoyllysine-residue succinyltransferase or DLST). Plays a key role in the Krebs (citric acid) cycle, which is a common pathway for oxidation of fuel molecules, including carbohydrates, fatty acids, and amino acids. Can catalyze the decarboxylation of 2-oxoadipate in vitro, but at a much lower rate than 2-oxoglutarate. Mainly active in the mitochondrion. A fraction of the 2-oxoglutarate dehydrogenase complex also localizes in the nucleus and is required for lysine succinylation of histones: associates with KAT2A on chromatin and provides succinyl-CoA to histone succinyltransferase KAT2A. This is 2-oxoglutarate dehydrogenase complex component E1 from Bos taurus (Bovine).